The primary structure comprises 284 residues: GPN-loop GTPase 3 (284 aa).

Residue G13–T18 participates in GTP binding. A Gly-Pro-Asn (GPN)-loop; involved in dimer interface motif is present at residues G72–N74. T174–D177 serves as a coordination point for GTP. Residues E262–E284 form a disordered region.

This sequence belongs to the GPN-loop GTPase family. As to quaternary structure, heterodimer with GPN1. Binds to RNA polymerase II (RNAPII). Interacts directly with subunits RPB4 and RPB7 and the CTD of RPB1.

Its function is as follows. Small GTPase required for proper localization of RNA polymerase II (RNAPII). May act at an RNAP assembly step prior to nuclear import. This Mus musculus (Mouse) protein is GPN-loop GTPase 3.